Consider the following 192-residue polypeptide: UPF0312 protein PSPTO_5071 (192 aa).

The first 23 residues, 1–23, serve as a signal peptide directing secretion; that stretch reads MLKKSLAALALGTALLSAGQAMA.

This sequence belongs to the UPF0312 family. Type 1 subfamily.

Its subcellular location is the periplasm. The protein is UPF0312 protein PSPTO_5071 of Pseudomonas syringae pv. tomato (strain ATCC BAA-871 / DC3000).